Consider the following 308-residue polypeptide: MPGQELRTVNGSQMLLVLLVLSWLPHGGALSLAEASRASFPGPSELHSEDSRFRELRKRYEDLLTRLRANQSWEDSNTDLVPAPAVRILTPEVRLGSGGHLHLRISRAALPEGLPEASRLHRALFRLSPTASRSWDVTRPLRRQLSLARPQAPALHLRLSPPPSQSDQLLAESSSARPQLELHLRPQAARGRRRARARNGDHCPLGPGRCCRLHTVRASLEDLGWADWVLSPREVQVTMCIGACPSQFRAANMHAQIKTSLHRLKPDTVPAPCCVPASYNPMVLIQKTDTGVSLQTYDDLLAKDCHCI.

Positions M1–A29 are cleaved as a signal peptide. The propeptide occupies L30 to R194. An N-linked (GlcNAc...) asparagine glycan is attached at N70. The tract at residues A152–R177 is disordered. Polar residues predominate over residues Q165–R177. Disulfide bonds link C203–C210, C211–C274, C240–C305, and C244–C307.

Belongs to the TGF-beta family. As to quaternary structure, homodimer; disulfide-linked. Interacts with GFRAL and RET; ligand of GFRAL, which mediates GDF15 internalization and cellular signaling through interaction with RET via the formation of a 2:2:2 ternary complex composed of GDF15, GFRAL and RET. Detected in plasma (at protein level). Highly expressed in placenta, with lower levels in prostate and colon and some expression in kidney.

It localises to the secreted. Hormone produced in response to various stresses to confer information about those stresses to the brain, and trigger an aversive response, characterized by nausea, vomiting, and/or loss of appetite. The aversive response is both required to reduce continuing exposure to those stresses at the time of exposure and to promote avoidance behavior in the future. Acts by binding to its receptor, GFRAL, activating GFRAL-expressing neurons localized in the area postrema and nucleus tractus solitarius of the brainstem. It then triggers the activation of neurons localized within the parabrachial nucleus and central amygdala, which constitutes part of the 'emergency circuit' that shapes responses to stressful conditions. The GDF15-GFRAL signal induces expression of genes involved in metabolism, such as lipid metabolism in adipose tissues. Required for avoidance behavior in response to food allergens: induced downstream of mast cell activation to promote aversion and minimize harmful effects of exposure to noxious substances. In addition to suppress appetite, also promotes weight loss by enhancing energy expenditure in muscle: acts by increasing calcium futile cycling in muscle. Contributes to the effect of metformin, an anti-diabetic drug, on appetite reduction and weight loss: produced in the kidney in response to metformin treatment, thereby activating the GDF15-GFRAL response, leading to reduced appetite and weight. The contribution of GDF15 to weight loss following metformin treatment is however limited and subject to discussion. Produced in response to anticancer drugs, such as camptothecin or cisplatin, promoting nausea, vomiting and contributing to malnutrition. Overproduced in many cancers, promoting anorexia in cancer (cachexia). Responsible for the risk of nausea and vomiting during pregnancy: high levels of GDF15 during pregnancy, mostly originating from the fetus, are associated with increased nausea and vomiting. Maternal sensitivity to nausea is probably determined by pre-pregnancy exposure to GDF15, women with naturally high level of GDF15 being less susceptible to nausea than women with low levels of GDF15 before pregnancy. Promotes metabolic adaptation in response to systemic inflammation caused by bacterial and viral infections in order to promote tissue tolerance and prevent tissue damage. Required for tissue tolerance in response to myocardial infarction by acting as an inhibitor of leukocyte integring activation, thereby protecting against cardiac rupture. Inhibits growth hormone signaling on hepatocytes. The chain is Growth/differentiation factor 15 from Homo sapiens (Human).